Here is a 608-residue protein sequence, read N- to C-terminus: Sensor protein kinase WalK (608 aa).

Transmembrane regions (helical) follow at residues 14-34 and 182-202; these read LVIV…LYFT and IFII…FFIA. The HAMP domain maps to 203 to 255; sequence RTITRPITDMRNQTVEMSKGNYTQRVKIYGNDEIGELALAFNNLSKRVQEAQA. The PAS domain occupies 260–330; it reads EKRRLDSVIT…EIQENNDSFL (71 aa). The 54-residue stretch at 324-377 folds into the PAC domain; it reads ENNDSFLLDINEDEGIIARVNFSTIVQETGFVTGYIAVLHDVTEQQQVERERRE. Residues 381 to 599 enclose the Histidine kinase domain; it reads NVSHELRTPL…SIFITLPCEV (219 aa). Residue His-384 is modified to Phosphohistidine; by autocatalysis.

Autophosphorylated.

It localises to the cell membrane. It catalyses the reaction ATP + protein L-histidine = ADP + protein N-phospho-L-histidine.. Its function is as follows. Member of the two-component regulatory system WalK/WalR. WalK functions as a sensor protein kinase which is autophosphorylated at a histidine residue and transfers its phosphate group to WalR. The sequence is that of Sensor protein kinase WalK (walK) from Staphylococcus haemolyticus (strain JCSC1435).